The primary structure comprises 75 residues: U-stichotoxin-Hau3a (75 aa).

A signal peptide spans 1 to 19 (MNHLIILVVAAVFLGMASA). A propeptide spanning residues 20 to 26 (EDVFHKR) is cleaved from the precursor. Disulfide bonds link C31-C71, C33-C61, and C54-C72.

The protein belongs to the sea anemone sodium channel inhibitory toxin family. Type I subfamily. Post-translationally, contains 3 disulfide bonds.

The protein localises to the secreted. Its subcellular location is the nematocyst. Functionally, toxin that is lethal to crab. The protein is U-stichotoxin-Hau3a of Heteractis aurora (Banded sea anemone).